A 325-amino-acid chain; its full sequence is uncharacterized protein (325 aa).

Residues 108–141 (PHRTQGISSTSSKSSKGGKKTPVRSTPKEIKKAT) are disordered.

This is an uncharacterized protein from Homo sapiens (Human).